The chain runs to 227 residues: Guanylate kinase (227 aa).

Residues 21 to 199 (GNLFMVVAPS…ALAELECIVA (179 aa)) form the Guanylate kinase-like domain. 28–35 (APSGAGKS) contributes to the ATP binding site.

Belongs to the guanylate kinase family.

The protein resides in the cytoplasm. The catalysed reaction is GMP + ATP = GDP + ADP. Essential for recycling GMP and indirectly, cGMP. The chain is Guanylate kinase from Burkholderia lata (strain ATCC 17760 / DSM 23089 / LMG 22485 / NCIMB 9086 / R18194 / 383).